Consider the following 504-residue polypeptide: Probable cytochrome P450 305a1 (504 aa).

Residue Cys450 participates in heme binding.

It belongs to the cytochrome P450 family. Requires heme as cofactor.

It is found in the endoplasmic reticulum membrane. The protein resides in the microsome membrane. Its function is as follows. May be involved in the metabolism of insect hormones and in the breakdown of synthetic insecticides. The chain is Probable cytochrome P450 305a1 (Cyp305a1) from Drosophila melanogaster (Fruit fly).